The sequence spans 763 residues: Phosphoglycerol transferase I (763 aa).

Helical transmembrane passes span 1–21 (MSELLSVALFLASVLIYAWKA), 26–46 (WWFAATLTVLGLFVILNITLY), 77–97 (ILPGIGIALALVAVFGALGWI), and 108–128 (VGYSLLALLLALGSVDASPAF).

This sequence belongs to the OpgB family.

Its subcellular location is the cell inner membrane. It catalyses the reaction a phosphatidylglycerol + a membrane-derived-oligosaccharide D-glucose = a 1,2-diacyl-sn-glycerol + a membrane-derived-oligosaccharide 6-(glycerophospho)-D-glucose.. Its pathway is glycan metabolism; osmoregulated periplasmic glucan (OPG) biosynthesis. Transfers a phosphoglycerol residue from phosphatidylglycerol to the membrane-bound nascent glucan backbones. The protein is Phosphoglycerol transferase I of Salmonella agona (strain SL483).